The following is a 480-amino-acid chain: Argininosuccinate lyase (480 aa).

A compositionally biased stretch (polar residues) spans 1 to 17 (MTDTTPSADLGASSQQP). The tract at residues 1-24 (MTDTTPSADLGASSQQPAKAWSGR) is disordered.

It belongs to the lyase 1 family. Argininosuccinate lyase subfamily.

The protein localises to the cytoplasm. It carries out the reaction 2-(N(omega)-L-arginino)succinate = fumarate + L-arginine. The protein operates within amino-acid biosynthesis; L-arginine biosynthesis; L-arginine from L-ornithine and carbamoyl phosphate: step 3/3. The sequence is that of Argininosuccinate lyase from Azoarcus sp. (strain BH72).